The primary structure comprises 276 residues: MQTSSFPIVIDDHLLPDKAHALAQQLNLPLISATEAEKSAPLMKLGWWQDGKKSGDHTNEIDYKLALFPPSTGPVCIDFVSGKKNHRRQFGGGKGQPLARAVLAAEHPTIIDATAGMGGDAFVFASLGCQVTMIERSPIIAALLSDALNRAQQTGVAEDIQEIVKRLRLINDDATQYLTTQAPICDVIYLDPMYPEKKKTAATKKEMQALQHLVGPDIDSETLLAAALHVAQKRVVVKRPKNAPALTGIQPNASIQSPNTRYDIYAIKALKAAGKL.

S-adenosyl-L-methionine is bound by residues 135 to 136 and Asp191; that span reads ER.

This sequence belongs to the methyltransferase superfamily. RsmJ family.

It is found in the cytoplasm. It carries out the reaction guanosine(1516) in 16S rRNA + S-adenosyl-L-methionine = N(2)-methylguanosine(1516) in 16S rRNA + S-adenosyl-L-homocysteine + H(+). In terms of biological role, specifically methylates the guanosine in position 1516 of 16S rRNA. This Hydrogenovibrio crunogenus (strain DSM 25203 / XCL-2) (Thiomicrospira crunogena) protein is Ribosomal RNA small subunit methyltransferase J.